Reading from the N-terminus, the 205-residue chain is MTFLPLKSPLKFYAVVPTADWVERMVEAGADTVQLRCKALHGDELKREIARCVAACQGSHTQLFINDHWREAIEAGAYGVHLGQEDMDTADLAAIAAAGLRLGLSTHSVAELDRALSVHPSYIASGAIFPTTTKQMPTAPQGLDKLREYVKQAGGTPVVAIGGIDLNNARAVLATGVSSLAAVRAVTKAANPEAVVKAFQALWDG.

4-amino-2-methyl-5-(diphosphooxymethyl)pyrimidine contacts are provided by residues 34-38 (QLRCK) and N66. Residues D67 and D86 each contribute to the Mg(2+) site. S105 provides a ligand contact to 4-amino-2-methyl-5-(diphosphooxymethyl)pyrimidine. 131–133 (TTT) provides a ligand contact to 2-[(2R,5Z)-2-carboxy-4-methylthiazol-5(2H)-ylidene]ethyl phosphate. K134 contacts 4-amino-2-methyl-5-(diphosphooxymethyl)pyrimidine. G163 contacts 2-[(2R,5Z)-2-carboxy-4-methylthiazol-5(2H)-ylidene]ethyl phosphate.

Belongs to the thiamine-phosphate synthase family. Requires Mg(2+) as cofactor.

The catalysed reaction is 2-[(2R,5Z)-2-carboxy-4-methylthiazol-5(2H)-ylidene]ethyl phosphate + 4-amino-2-methyl-5-(diphosphooxymethyl)pyrimidine + 2 H(+) = thiamine phosphate + CO2 + diphosphate. The enzyme catalyses 2-(2-carboxy-4-methylthiazol-5-yl)ethyl phosphate + 4-amino-2-methyl-5-(diphosphooxymethyl)pyrimidine + 2 H(+) = thiamine phosphate + CO2 + diphosphate. It carries out the reaction 4-methyl-5-(2-phosphooxyethyl)-thiazole + 4-amino-2-methyl-5-(diphosphooxymethyl)pyrimidine + H(+) = thiamine phosphate + diphosphate. It participates in cofactor biosynthesis; thiamine diphosphate biosynthesis; thiamine phosphate from 4-amino-2-methyl-5-diphosphomethylpyrimidine and 4-methyl-5-(2-phosphoethyl)-thiazole: step 1/1. Functionally, condenses 4-methyl-5-(beta-hydroxyethyl)thiazole monophosphate (THZ-P) and 2-methyl-4-amino-5-hydroxymethyl pyrimidine pyrophosphate (HMP-PP) to form thiamine monophosphate (TMP). This Neisseria meningitidis serogroup A / serotype 4A (strain DSM 15465 / Z2491) protein is Thiamine-phosphate synthase.